Consider the following 70-residue polypeptide: uncharacterized protein (70 aa).

A helical transmembrane segment spans residues Val4 to Tyr24.

It localises to the host membrane. This is an uncharacterized protein from Dryophytes versicolor (chameleon treefrog).